A 600-amino-acid chain; its full sequence is Adenine deaminase 4 (600 aa).

Belongs to the metallo-dependent hydrolases superfamily. Adenine deaminase family. Requires Mn(2+) as cofactor.

It carries out the reaction adenine + H2O + H(+) = hypoxanthine + NH4(+). The protein is Adenine deaminase 4 of Rhizobium meliloti (strain 1021) (Ensifer meliloti).